We begin with the raw amino-acid sequence, 512 residues long: Cytochrome P450 82C3 (512 aa).

The chain crosses the membrane as a helical span at residues 1–21 (MDTSLFSLFVSILVFVFIALF). Cysteine 451 provides a ligand contact to heme.

Belongs to the cytochrome P450 family. The cofactor is heme.

The protein localises to the membrane. The chain is Cytochrome P450 82C3 (CYP82C3) from Arabidopsis thaliana (Mouse-ear cress).